The following is a 65-amino-acid chain: MAVPKKKTSKSKRNMRRSHLALGKINVIVDSHTGEYKLPHHISLVDGTYNNRQVVTKKIDTEEVA.

This sequence belongs to the bacterial ribosomal protein bL32 family.

The protein is Large ribosomal subunit protein bL32 (rpmF) of Rickettsia prowazekii (strain Madrid E).